Reading from the N-terminus, the 489-residue chain is Glutamate--tRNA ligase (489 aa).

A 'HIGH' region motif is present at residues 10–20; the sequence is PSPTGFLHIGG. The 'KMSKS' region motif lies at 261–265; that stretch reads KLSKR. Residue Lys-264 participates in ATP binding.

It belongs to the class-I aminoacyl-tRNA synthetase family. Glutamate--tRNA ligase type 1 subfamily. Monomer.

It localises to the cytoplasm. The catalysed reaction is tRNA(Glu) + L-glutamate + ATP = L-glutamyl-tRNA(Glu) + AMP + diphosphate. Its function is as follows. Catalyzes the attachment of glutamate to tRNA(Glu) in a two-step reaction: glutamate is first activated by ATP to form Glu-AMP and then transferred to the acceptor end of tRNA(Glu). The chain is Glutamate--tRNA ligase from Finegoldia magna (strain ATCC 29328 / DSM 20472 / WAL 2508) (Peptostreptococcus magnus).